A 254-amino-acid chain; its full sequence is 3-deoxy-manno-octulosonate cytidylyltransferase (254 aa).

It belongs to the KdsB family.

The protein localises to the cytoplasm. It carries out the reaction 3-deoxy-alpha-D-manno-oct-2-ulosonate + CTP = CMP-3-deoxy-beta-D-manno-octulosonate + diphosphate. It functions in the pathway nucleotide-sugar biosynthesis; CMP-3-deoxy-D-manno-octulosonate biosynthesis; CMP-3-deoxy-D-manno-octulosonate from 3-deoxy-D-manno-octulosonate and CTP: step 1/1. It participates in bacterial outer membrane biogenesis; lipopolysaccharide biosynthesis. Its function is as follows. Activates KDO (a required 8-carbon sugar) for incorporation into bacterial lipopolysaccharide in Gram-negative bacteria. The polypeptide is 3-deoxy-manno-octulosonate cytidylyltransferase (Bordetella pertussis (strain Tohama I / ATCC BAA-589 / NCTC 13251)).